The chain runs to 276 residues: Rhomboid protease GlpG (276 aa).

Transmembrane regions (helical) follow at residues 96 to 116 (VTWL…IVGA), 142 to 162 (AFMH…WYIG), 169 to 189 (LGSG…GYVQ), 192 to 212 (FSGP…GYAW), 229 to 249 (LIAF…GMSM), and 250 to 270 (ANGA…ADTV). The Nucleophile role is filled by S201. The active site involves H254.

This sequence belongs to the peptidase S54 family.

Its subcellular location is the cell inner membrane. The enzyme catalyses Cleaves type-1 transmembrane domains using a catalytic dyad composed of serine and histidine that are contributed by different transmembrane domains.. Rhomboid-type serine protease that catalyzes intramembrane proteolysis. This is Rhomboid protease GlpG from Citrobacter koseri (strain ATCC BAA-895 / CDC 4225-83 / SGSC4696).